Reading from the N-terminus, the 342-residue chain is Probable dual-specificity RNA methyltransferase RlmN (342 aa).

Glu91 functions as the Proton acceptor in the catalytic mechanism. A Radical SAM core domain is found at 97-326; it reads YRFGNTACVS…CTVRRELGSD (230 aa). Cys104 and Cys331 are disulfide-bonded. Positions 111, 115, and 118 each coordinate [4Fe-4S] cluster. S-adenosyl-L-methionine contacts are provided by residues 157–158, Ser189, 212–214, and Asn288; these read GE and SLH. Residue Cys331 is the S-methylcysteine intermediate of the active site.

It belongs to the radical SAM superfamily. RlmN family. The cofactor is [4Fe-4S] cluster.

The protein resides in the cytoplasm. The enzyme catalyses adenosine(2503) in 23S rRNA + 2 reduced [2Fe-2S]-[ferredoxin] + 2 S-adenosyl-L-methionine = 2-methyladenosine(2503) in 23S rRNA + 5'-deoxyadenosine + L-methionine + 2 oxidized [2Fe-2S]-[ferredoxin] + S-adenosyl-L-homocysteine. It catalyses the reaction adenosine(37) in tRNA + 2 reduced [2Fe-2S]-[ferredoxin] + 2 S-adenosyl-L-methionine = 2-methyladenosine(37) in tRNA + 5'-deoxyadenosine + L-methionine + 2 oxidized [2Fe-2S]-[ferredoxin] + S-adenosyl-L-homocysteine. Its function is as follows. Specifically methylates position 2 of adenine 2503 in 23S rRNA and position 2 of adenine 37 in tRNAs. The sequence is that of Probable dual-specificity RNA methyltransferase RlmN from Thermoanaerobacter pseudethanolicus (strain ATCC 33223 / 39E) (Clostridium thermohydrosulfuricum).